Reading from the N-terminus, the 275-residue chain is Pyridoxal phosphate homeostasis protein (275 aa).

The residue at position 6 (S6) is a Phosphoserine. K47 is subject to N6-(pyridoxal phosphate)lysine. Position 69 is a phosphotyrosine (Y69). Position 125 is an N6-succinyllysine (K125). S226 and S244 each carry phosphoserine. The segment covering 251–263 (DYSKKPTPDKCAA) has biased composition (basic and acidic residues). The disordered stretch occupies residues 251 to 275 (DYSKKPTPDKCAADVKAPLEVAQEH).

Belongs to the pyridoxal phosphate-binding protein YggS/PROSC family. In terms of tissue distribution, ubiquitous.

Functionally, pyridoxal 5'-phosphate (PLP)-binding protein, which may be involved in intracellular homeostatic regulation of pyridoxal 5'-phosphate (PLP), the active form of vitamin B6. This chain is Pyridoxal phosphate homeostasis protein, found in Homo sapiens (Human).